Reading from the N-terminus, the 614-residue chain is Zinc metalloproteinase-disintegrin-like Eoc1 (614 aa).

An N-terminal signal peptide occupies residues 1–19 (MQVLLITISLAVLPYLGSS). A propeptide spanning residues 20–193 (IILESGIVND…KASQLNLTPE (174 aa)) is cleaved from the precursor. The residue at position 194 (Q194) is a Pyrrolidone carboxylic acid. Residues 202-398 (KHIKVAIVAD…KMPQCILIKP (197 aa)) form the Peptidase M12B domain. N268 carries an N-linked (GlcNAc...) asparagine glycan. Cystine bridges form between C313/C393, C353/C377, and C355/C360. A Zn(2+)-binding site is contributed by H338. E339 is a catalytic residue. Zn(2+)-binding residues include H342 and H348. N376 is a glycosylation site (N-linked (GlcNAc...) asparagine). Positions 406-492 (PPVCGNSLVE…ECPADQFQRN (87 aa)) constitute a Disintegrin domain. Ca(2+) is bound by residues V408, N411, L413, E415, E418, and D421. Cystine bridges form between C409–C438, C420–C433, C422–C428, C432–C455, C446–C452, C451–C477, C464–C484, C471–C503, C496–C508, C515–C565, C530–C576, C543–C553, C560–C602, and C596–C607. Residues 470-472 (ECD) carry the D/ECD-tripeptide motif. N498 carries N-linked (GlcNAc...) asparagine glycosylation.

It belongs to the venom metalloproteinase (M12B) family. P-III subfamily. P-IIIc sub-subfamily. In terms of assembly, heterodimer; disulfide-linked. The cofactor is Zn(2+). As to expression, expressed by the venom gland.

The protein resides in the secreted. In terms of biological role, this metalloproteinase hydrolyzes azocasein, and oxidized insulin B-chain. Also hydrolyzes the alpha-chain (FGA) and more slowly the beta-chain of fibrinogen (FGB), without affecting the gamma-chain. Does not cleave fibrin. Inhibits endothelial cell adhesion to extracellular matrix proteins such as fibrinogen, fibronectin, vitronectin, collagen I, and collagen IV. Induces apoptosis in vascular endothelial cells. The sequence is that of Zinc metalloproteinase-disintegrin-like Eoc1 (Svmp3-Eoc1) from Echis ocellatus (Ocellated saw-scaled viper).